The following is a 391-amino-acid chain: Metallophosphoesterase 1 (391 aa).

The helical transmembrane segment at 25 to 45 (TVVIISVLLFCEYFIYHLVIF) threads the bilayer. The a divalent metal cation site is built by Asp-72, Asp-114, Asn-152, His-244, His-298, and His-300. Residues 352–372 (VLATYGAAAVFLVVLILAHLE) traverse the membrane as a helical segment.

Belongs to the metallophosphoesterase superfamily. MPPE1 family. In terms of assembly, interacts with GPI-anchor proteins (via the GPI portion). Interacts with TMED10. Mn(2+) is required as a cofactor.

It localises to the endoplasmic reticulum-Golgi intermediate compartment membrane. Metallophosphoesterase that catalyzes the removal of a side-chain ethanolamine-phosphate (EtNP) from the second mannose of the GPI-anchor protein intermediate. Participates in the glycan remodeling steps of GPI-anchor maturation to allow an efficient transport of GPI-anchor proteins from the endoplasmic reticulum to the Golgi. The chain is Metallophosphoesterase 1 from Cricetulus griseus (Chinese hamster).